A 335-amino-acid polypeptide reads, in one-letter code: Mitochondrial amidoxime reducing component 2 (335 aa).

The N-terminal 35 residues, 1–35 (MGASSSSALARLGLPAQARPRWLGVAVLGLAAVAL), are a transit peptide targeting the mitochondrion. Glycyl lysine isopeptide (Lys-Gly) (interchain with G-Cter in ubiquitin) cross-links involve residues Lys59, Lys138, and Lys144. Lys156 is modified (N6-acetyllysine; alternate). Residue Lys156 forms a Glycyl lysine isopeptide (Lys-Gly) (interchain with G-Cter in ubiquitin); alternate linkage. Glycyl lysine isopeptide (Lys-Gly) (interchain with G-Cter in ubiquitin) cross-links involve residues Lys173, Lys187, Lys287, and Lys294. Residues 188–334 (GRTSRKLLPT…LRVGDPVYRM (147 aa)) enclose the MOSC domain.

Component of a complex composed of cytochrome b5, NADH-cytochrome b5 reductase (CYB5R3) and MTARC2. Mo-molybdopterin is required as a cofactor. Post-translationally, ubiquitinated by PRKN during mitophagy, leading to its degradation and enhancement of mitophagy. Deubiquitinated by USP30.

It localises to the mitochondrion outer membrane. It is found in the peroxisome. It catalyses the reaction N(omega)-hydroxy-L-arginine + 2 Fe(II)-[cytochrome b5] + 2 H(+) = L-arginine + 2 Fe(III)-[cytochrome b5] + H2O. Its function is as follows. Catalyzes the reduction of N-oxygenated molecules, acting as a counterpart of cytochrome P450 and flavin-containing monooxygenases in metabolic cycles. As a component of prodrug-converting system, reduces a multitude of N-hydroxylated prodrugs particularly amidoximes, leading to increased drug bioavailability. May be involved in mitochondrial N(omega)-hydroxy-L-arginine (NOHA) reduction, regulating endogenous nitric oxide levels and biosynthesis. Postulated to cleave the N-OH bond of N-hydroxylated substrates in concert with electron transfer from NADH to cytochrome b5 reductase then to cytochrome b5, the ultimate electron donor that primes the active site for substrate reduction. This is Mitochondrial amidoxime reducing component 2 (MTARC2) from Macaca fascicularis (Crab-eating macaque).